The primary structure comprises 222 residues: UPF0758 protein YicR (222 aa).

The region spanning 100-222 (PLLSPEMTRE…YVSFAERGWI (123 aa)) is the MPN domain. The Zn(2+) site is built by H171, H173, and D184. Residues 171–184 (HNHPSGCAEPSKAD) carry the JAMM motif motif.

This sequence belongs to the UPF0758 family. YicR subfamily.

This is UPF0758 protein YicR from Escherichia coli O81 (strain ED1a).